A 159-amino-acid chain; its full sequence is ATP synthase subunit b (159 aa).

The chain crosses the membrane as a helical span at residues 2–22; that stretch reads EFNLVTIGFTIVNFIILMLIL.

It belongs to the ATPase B chain family. F-type ATPases have 2 components, F(1) - the catalytic core - and F(0) - the membrane proton channel. F(1) has five subunits: alpha(3), beta(3), gamma(1), delta(1), epsilon(1). F(0) has three main subunits: a(1), b(2) and c(10-14). The alpha and beta chains form an alternating ring which encloses part of the gamma chain. F(1) is attached to F(0) by a central stalk formed by the gamma and epsilon chains, while a peripheral stalk is formed by the delta and b chains.

It is found in the cell membrane. In terms of biological role, f(1)F(0) ATP synthase produces ATP from ADP in the presence of a proton or sodium gradient. F-type ATPases consist of two structural domains, F(1) containing the extramembraneous catalytic core and F(0) containing the membrane proton channel, linked together by a central stalk and a peripheral stalk. During catalysis, ATP synthesis in the catalytic domain of F(1) is coupled via a rotary mechanism of the central stalk subunits to proton translocation. Its function is as follows. Component of the F(0) channel, it forms part of the peripheral stalk, linking F(1) to F(0). This chain is ATP synthase subunit b, found in Clostridium acetobutylicum (strain ATCC 824 / DSM 792 / JCM 1419 / IAM 19013 / LMG 5710 / NBRC 13948 / NRRL B-527 / VKM B-1787 / 2291 / W).